Reading from the N-terminus, the 281-residue chain is Probable endonuclease 4 (281 aa).

Residues His69, His109, Glu145, Asp179, His182, His216, Asp229, His231, and Glu261 each contribute to the Zn(2+) site.

It belongs to the AP endonuclease 2 family. Requires Zn(2+) as cofactor.

The enzyme catalyses Endonucleolytic cleavage to 5'-phosphooligonucleotide end-products.. In terms of biological role, endonuclease IV plays a role in DNA repair. It cleaves phosphodiester bonds at apurinic or apyrimidinic (AP) sites, generating a 3'-hydroxyl group and a 5'-terminal sugar phosphate. The polypeptide is Probable endonuclease 4 (Chlorobaculum parvum (strain DSM 263 / NCIMB 8327) (Chlorobium vibrioforme subsp. thiosulfatophilum)).